The following is a 423-amino-acid chain: Imidazolonepropionase (423 aa).

Fe(3+) is bound by residues His-91 and His-93. Positions 91 and 93 each coordinate Zn(2+). The 4-imidazolone-5-propanoate site is built by Arg-100, Tyr-163, and His-193. N-formimidoyl-L-glutamate is bound at residue Tyr-163. A Fe(3+)-binding site is contributed by His-257. His-257 is a Zn(2+) binding site. Gln-260 serves as a coordination point for 4-imidazolone-5-propanoate. Asp-331 is a Fe(3+) binding site. Residue Asp-331 coordinates Zn(2+). N-formimidoyl-L-glutamate-binding residues include Asn-333 and Gly-335. Thr-336 serves as a coordination point for 4-imidazolone-5-propanoate.

This sequence belongs to the metallo-dependent hydrolases superfamily. HutI family. Requires Zn(2+) as cofactor. Fe(3+) serves as cofactor.

The protein resides in the cytoplasm. It catalyses the reaction 4-imidazolone-5-propanoate + H2O = N-formimidoyl-L-glutamate. The protein operates within amino-acid degradation; L-histidine degradation into L-glutamate; N-formimidoyl-L-glutamate from L-histidine: step 3/3. Catalyzes the hydrolytic cleavage of the carbon-nitrogen bond in imidazolone-5-propanoate to yield N-formimidoyl-L-glutamate. It is the third step in the universal histidine degradation pathway. This is Imidazolonepropionase from Bdellovibrio bacteriovorus (strain ATCC 15356 / DSM 50701 / NCIMB 9529 / HD100).